The primary structure comprises 323 residues: Arginase (323 aa).

Residues H119, D142, H144, and D146 each contribute to the Mn(2+) site. Substrate contacts are provided by residues 144–148 (HADIN), 155–157 (SKN), and D198. 2 residues coordinate Mn(2+): D247 and D249. Residues T261 and E292 each coordinate substrate.

The protein belongs to the arginase family. As to quaternary structure, homotrimer. Mn(2+) serves as cofactor.

The catalysed reaction is L-arginine + H2O = urea + L-ornithine. Its pathway is nitrogen metabolism; urea cycle; L-ornithine and urea from L-arginine: step 1/1. The chain is Arginase (car1) from Schizosaccharomyces pombe (strain 972 / ATCC 24843) (Fission yeast).